We begin with the raw amino-acid sequence, 553 residues long: Methionine--tRNA ligase (553 aa).

Residues Pro-12–His-22 carry the 'HIGH' region motif. 4 residues coordinate Zn(2+): Cys-144, Cys-147, Cys-157, and Cys-160. Positions Lys-332–Ser-336 match the 'KMSKS' region motif. Lys-335 contributes to the ATP binding site.

It belongs to the class-I aminoacyl-tRNA synthetase family. MetG type 1 subfamily. As to quaternary structure, monomer. It depends on Zn(2+) as a cofactor.

It is found in the cytoplasm. It catalyses the reaction tRNA(Met) + L-methionine + ATP = L-methionyl-tRNA(Met) + AMP + diphosphate. Functionally, is required not only for elongation of protein synthesis but also for the initiation of all mRNA translation through initiator tRNA(fMet) aminoacylation. In Dehalococcoides mccartyi (strain CBDB1), this protein is Methionine--tRNA ligase.